The primary structure comprises 285 residues: 4,4'-diapophytoene synthase (285 aa).

Residues 18-21 (YSKS), tyrosine 41, and arginine 45 contribute to the (2E,6E)-farnesyl diphosphate site. Positions 48 and 52 each coordinate Mg(2+). Glutamine 163 lines the (2E,6E)-farnesyl diphosphate pocket. Mg(2+) is bound at residue asparagine 166. (2E,6E)-farnesyl diphosphate is bound at residue arginine 169. Residue aspartate 170 participates in Mg(2+) binding. Tyrosine 247 provides a ligand contact to (2E,6E)-farnesyl diphosphate.

The protein belongs to the phytoene/squalene synthase family. CrtM subfamily. Requires Mg(2+) as cofactor.

It carries out the reaction 2 (2E,6E)-farnesyl diphosphate = 15-cis-4,4'-diapophytoene + 2 diphosphate. Its pathway is carotenoid biosynthesis; staphyloxanthin biosynthesis; staphyloxanthin from farnesyl diphosphate: step 1/5. In terms of biological role, involved in the biosynthesis of the yellow-orange carotenoid staphyloxanthin, which plays a role in the virulence via its protective function against oxidative stress. Catalyzes the head-to-head condensation of two molecules of farnesyl diphosphate (FPP) into the colorless C(30) carotenoid 4,4'-diapophytoene (dehydrosqualene). In Staphylococcus haemolyticus (strain JCSC1435), this protein is 4,4'-diapophytoene synthase (crtM).